Here is a 364-residue protein sequence, read N- to C-terminus: Anionic peroxidase (364 aa).

Residues 1 to 20 (MASFMKQLSLVLSFIALALA) form the signal peptide. Positions 21-66 (GCAVYQNTQTAMKDQLKVTPTWLDNTLKSTNLLSLGLGKPSGGKLG) are excised as a propeptide. His-99 (proton acceptor) is an active-site residue. Residues Asp-100, Val-103, Gly-105, and Asp-107 each coordinate Ca(2+). Cys-101 and Cys-106 are oxidised to a cystine. Residues Asn-113, Asn-188, Asn-202, and Asn-216 are each glycosylated (N-linked (GlcNAc...) asparagine). 2 cysteine pairs are disulfide-bonded: Cys-155-Cys-343 and Cys-234-Cys-255. His-227 serves as a coordination point for heme b. Thr-228 serves as a coordination point for Ca(2+). Asn-254 and Asn-260 each carry an N-linked (GlcNAc...) asparagine glycan. 3 residues coordinate Ca(2+): Asp-268, Thr-270, and Asp-275. N-linked (GlcNAc...) asparagine glycosylation is present at Asn-299.

This sequence belongs to the peroxidase family. Classical plant (class III) peroxidase subfamily. It depends on Ca(2+) as a cofactor. Heme b is required as a cofactor. In terms of tissue distribution, highly expressed in suspension cultured cells and calli. Weak expression also found in the stems of intact plants. No expression in leaf, tuberous root and non-tuberous root.

Its subcellular location is the secreted. The catalysed reaction is 2 a phenolic donor + H2O2 = 2 a phenolic radical donor + 2 H2O. In terms of biological role, removal of H(2)O(2), oxidation of toxic reductants, biosynthesis and degradation of lignin, suberization, auxin catabolism, response to environmental stresses such as wounding, pathogen attack and oxidative stress. These functions might be dependent on each isozyme/isoform in each plant tissue. Functionally, may contribute to protection against cold-induced oxidative stress. The chain is Anionic peroxidase from Ipomoea batatas (Sweet potato).